We begin with the raw amino-acid sequence, 366 residues long: DNA replication and repair protein RecF (366 aa).

Residue 30–37 (GRNAQGKT) coordinates ATP.

It belongs to the RecF family.

It localises to the cytoplasm. Its function is as follows. The RecF protein is involved in DNA metabolism; it is required for DNA replication and normal SOS inducibility. RecF binds preferentially to single-stranded, linear DNA. It also seems to bind ATP. This is DNA replication and repair protein RecF from Streptococcus thermophilus (strain ATCC BAA-250 / LMG 18311).